The chain runs to 202 residues: S-modulin (202 aa).

A lipid anchor (N-myristoyl glycine) is attached at Gly2. EF-hand domains follow at residues 25–60, 61–96, 97–132, and 147–182; these read QEEL…FPDA, DPKA…TSSG, KANQ…IFKM, and TPEK…NKEI. Positions 74, 76, 78, 80, 85, 110, 112, 114, 116, and 121 each coordinate Ca(2+).

The protein belongs to the recoverin family. Post-translationally, the N-terminus is blocked.

In terms of biological role, calcium-dependent regulator of light sensitivity of cGMP phosphodiesterase in rod outer segments. Controls rhodopsin phosphorylation in a Ca(2+)-dependent manner. The protein is S-modulin of Aquarana catesbeiana (American bullfrog).